Consider the following 757-residue polypeptide: RNA-directed RNA polymerase catalytic subunit (757 aa).

Residues 50 to 82 (SEKGKWTTNTETGAPQLNPIDGPLPEDNEPSGY) are disordered. Polar residues predominate over residues 55 to 64 (WTTNTETGAP). Short sequence motifs (nuclear localization signal) lie at residues 187–195 (RKRRVRDNM) and 203–216 (RTIGKKKQRVNKRS). Residues 249-256 (RGFVYFVE) are promoter-binding site. The RdRp catalytic domain maps to 286–483 (VRKMMTNSQD…GINMSKKKSY (198 aa)).

This sequence belongs to the influenza viruses polymerase PB1 family. Influenza RNA polymerase is composed of three subunits: PB1, PB2 and PA. Interacts (via N-terminus) with PA (via C-terminus). Interacts (via C-terminus) with PB2 (via N-terminus); this interaction is essential for transcription initiation. In terms of processing, phosphorylated by host PRKCA.

The protein localises to the host nucleus. It is found in the host cytoplasm. It catalyses the reaction RNA(n) + a ribonucleoside 5'-triphosphate = RNA(n+1) + diphosphate. Functionally, RNA-dependent RNA polymerase which is responsible for replication and transcription of virus RNA segments. The transcription of viral mRNAs occurs by a unique mechanism called cap-snatching. 5' methylated caps of cellular mRNAs are cleaved after 10-13 nucleotides by PA. In turn, these short capped RNAs are used as primers by PB1 for transcription of viral mRNAs. During virus replication, PB1 initiates RNA synthesis and copy vRNA into complementary RNA (cRNA) which in turn serves as a template for the production of more vRNAs. This Influenza A virus (strain A/Hong Kong/1/1968 H3N2) protein is RNA-directed RNA polymerase catalytic subunit.